The primary structure comprises 761 residues: Neutral ceramidase (761 aa).

At 1 to 11 (MAKRTFSSLEA) the chain is on the cytoplasmic side. Residues 12–32 (FLIFLLVMMTAITVALLTLLF) traverse the membrane as a helical; Signal-anchor for type II membrane protein segment. The Lumenal segment spans residues 33–761 (VTSGTIENHK…ISSPFEIVTT (729 aa)). A disordered region spans residues 43–76 (DSGNHWVSTTQGPTTTQSSPTTQTPTTQTPDLPP). Residues 50–76 (STTQGPTTTQSSPTTQTPTTQTPDLPP) show a composition bias toward low complexity. Residues T51, T52, T56, T57, and T58 are each glycosylated (O-linked (GalNAc...) threonine). 2 O-linked (GalNAc...) serine glycosylation sites follow: S60 and S61. O-linked (GalNAc...) threonine glycosylation is found at T63, T64, T66, T68, T69, and T71. L115 contacts Ca(2+). H175 serves as a coordination point for Zn(2+). N198 carries an N-linked (GlcNAc...) asparagine glycan. A Zn(2+)-binding site is contributed by H284. Catalysis depends on S335, which acts as the Nucleophile. Cystine bridges form between C343–C357 and C350–C365. N412 and N449 each carry an N-linked (GlcNAc...) asparagine glycan. The cysteines at positions 429 and 479 are disulfide-linked. Zn(2+) contacts are provided by E521 and Y560. Positions 693, 695, and 698 each coordinate Ca(2+). Residues 751-761 (GISSPFEIVTT) are required for correct folding and localization.

This sequence belongs to the neutral ceramidase family. Zn(2+) is required as a cofactor. Proteolytic cleavage of the N-terminus removes the signal-anchor and produces a soluble form of the protein. Post-translationally, N-glycosylated. Required for enzyme activity. In terms of processing, O-glycosylated. Required to retain it as a type II membrane protein at the cell surface. Phosphorylated. May prevent ubiquitination and subsequent degradation. Post-translationally, ubiquitinated, leading to its degradation by the proteasome. Ubiquitination is triggered by nitric oxide. As to expression, highly expressed in brain, kidney and heart. Expressed at lower level in other tissues such as liver. Expressed in intestine, kidney and liver (at protein level). Localizes in the epithelia of the jejunum and ileum.

The protein resides in the cell membrane. It localises to the membrane raft. Its subcellular location is the membrane. The protein localises to the caveola. It is found in the golgi apparatus membrane. The protein resides in the mitochondrion. It localises to the secreted. Its subcellular location is the extracellular exosome. It catalyses the reaction an N-acylsphing-4-enine + H2O = sphing-4-enine + a fatty acid. It carries out the reaction N-hexadecanoylsphing-4-enine + H2O = sphing-4-enine + hexadecanoate. The enzyme catalyses N-tetradecanoylsphing-4-enine + H2O = tetradecanoate + sphing-4-enine. The catalysed reaction is N-(9Z-octadecenoyl)-sphing-4-enine + H2O = sphing-4-enine + (9Z)-octadecenoate. It catalyses the reaction N-(15Z-tetracosenoyl)-sphing-4-enine + H2O = (15Z)-tetracosenoate + sphing-4-enine. It carries out the reaction N-octanoylsphing-4-enine + H2O = octanoate + sphing-4-enine. The enzyme catalyses N-dodecanoylsphing-4-enine + H2O = dodecanoate + sphing-4-enine. The catalysed reaction is N-(hexanoyl)sphing-4-enine + H2O = hexanoate + sphing-4-enine. It catalyses the reaction N-octadecanoylsphing-4-enine + H2O = sphing-4-enine + octadecanoate. It carries out the reaction sphinganine + hexadecanoate = N-hexadecanoylsphinganine + H2O. The enzyme catalyses N-(octadecanoyl)-sphinganine + H2O = sphinganine + octadecanoate. It functions in the pathway lipid metabolism; sphingolipid metabolism. The reverse reaction is inhibited by Zn(2+) and Cu(2+). Inhibited by cardiolipin and phosphatidic acid. In terms of biological role, plasma membrane ceramidase that hydrolyzes sphingolipid ceramides into sphingosine and free fatty acids at neutral pH. Ceramides, sphingosine, and its phosphorylated form sphingosine-1-phosphate are bioactive lipids that mediate cellular signaling pathways regulating several biological processes including cell proliferation, apoptosis and differentiation. Also catalyzes the reverse reaction allowing the synthesis of ceramides from fatty acids and sphingosine. Together with sphingomyelinase, participates in the production of sphingosine and sphingosine-1-phosphate from the degradation of sphingomyelin, a sphingolipid enriched in the plasma membrane of cells. Also participates in the hydrolysis of ceramides from the extracellular milieu allowing the production of sphingosine-1-phosphate inside and outside cells. This is the case for instance with the digestion of dietary sphingolipids in the intestinal tract. The polypeptide is Neutral ceramidase (Asah2) (Rattus norvegicus (Rat)).